Here is a 31-residue protein sequence, read N- to C-terminus: ARRRRSRRASRPVRRRRPRRVSRRRRARRRR.

The disordered stretch occupies residues 1 to 31; that stretch reads ARRRRSRRASRPVRRRRPRRVSRRRRARRRR.

As to expression, testis.

It localises to the nucleus. It is found in the chromosome. Functionally, protamines substitute for histones in the chromatin of sperm during the haploid phase of spermatogenesis. They compact sperm DNA into a highly condensed, stable and inactive complex. In Clupea harengus (Atlantic herring), this protein is Protamine-Z.